Consider the following 684-residue polypeptide: MEKDFTERSTKGQRKLANGVVENIESKLKNHLDNNNVINKSVNYEDVMCSNVKLSVHDDEYDIKNIKKDVCNLSKLSEERLSNNISLKDNNKVVKNPEIDTKTARQQYKKRLNSTQSTMNIEGNINNEKDDIIEDYDDGLIRNMDYEMSIVKNKRNNNNNNNNNNNNNNNNNNNNNNNNNNNNNNNNSNNVDNRKRNKNEECYDESYCISDNLDEITSYRNKLSLYNKLRMCFNYFGPGWIVAIAYLDPGNLCSNLNVGLIRSPDPTLEKDYSGYYLLWIMVYGHMLGFIFQVLSMRLGHVTGLDLASLCSKEFDRTTSTIIYVLVQIAIWGAHIQAIIGTFIALNLIFGISVKVAIFYTLFEAIIYSFLENKSLGLLENVLSFLVGILAVSFFVNVFMTPINFKELAISILYPRIPKGKEIDALALLGSIISAHIFYLHTNLTAKKKSVICNDLSLRRYNTLGTIESGGSLFLSCLTNCIIVLTFAEVNLKSFERRDQYNLFTAYEVMRKSFGKISMYIWSFGLLSSGNNSSFMCEYASKSVVEGFLNKKINTFVRVFTFRLMLFSLLYMFLTLNKYTLDQLTNFINVIQVLLLPMATIPLYRFSIHENVLGEFRLKKFPKFAVFLIIIAIIISNVLLTFLDFVHKETSLITIFFLVIFSFLYFGFIIYFFNIPIKKNYIQRN.

Residues 1-228 lie on the Cytoplasmic side of the membrane; sequence MEKDFTERST…YRNKLSLYNK (228 aa). Residues 153-195 form a disordered region; sequence NKRNNNNNNNNNNNNNNNNNNNNNNNNNNNNNNNNSNNVDNRK. Residues 156 to 191 show a composition bias toward low complexity; the sequence is NNNNNNNNNNNNNNNNNNNNNNNNNNNNNNNNSNNV. A helical transmembrane segment spans residues 229–247; the sequence is LRMCFNYFGPGWIVAIAYL. Residues 248–275 lie on the Vacuolar side of the membrane; sequence DPGNLCSNLNVGLIRSPDPTLEKDYSGY. Residues 276-299 traverse the membrane as a helical segment; that stretch reads YLLWIMVYGHMLGFIFQVLSMRLG. Residues 300–319 lie on the Cytoplasmic side of the membrane; it reads HVTGLDLASLCSKEFDRTTS. The helical transmembrane segment at 320 to 345 threads the bilayer; the sequence is TIIYVLVQIAIWGAHIQAIIGTFIAL. Topologically, residues 346–350 are vacuolar; sequence NLIFG. The helical transmembrane segment at 351–370 threads the bilayer; sequence ISVKVAIFYTLFEAIIYSFL. Residues 371–381 lie on the Cytoplasmic side of the membrane; that stretch reads ENKSLGLLENV. A helical membrane pass occupies residues 382–404; it reads LSFLVGILAVSFFVNVFMTPINF. Over 405–423 the chain is Vacuolar; that stretch reads KELAISILYPRIPKGKEID. A helical membrane pass occupies residues 424–445; sequence ALALLGSIISAHIFYLHTNLTA. Residues 446 to 465 are Cytoplasmic-facing; sequence KKKSVICNDLSLRRYNTLGT. Residues 466 to 487 traverse the membrane as a helical segment; that stretch reads IESGGSLFLSCLTNCIIVLTFA. Residues 488–515 are Vacuolar-facing; the sequence is EVNLKSFERRDQYNLFTAYEVMRKSFGK. A helical membrane pass occupies residues 516–534; it reads ISMYIWSFGLLSSGNNSSF. Topologically, residues 535 to 554 are cytoplasmic; sequence MCEYASKSVVEGFLNKKINT. Residues 555–573 traverse the membrane as a helical segment; the sequence is FVRVFTFRLMLFSLLYMFL. At 574-584 the chain is on the vacuolar side; it reads TLNKYTLDQLT. Residues 585–603 traverse the membrane as a helical segment; the sequence is NFINVIQVLLLPMATIPLY. The Cytoplasmic segment spans residues 604–622; sequence RFSIHENVLGEFRLKKFPK. The helical transmembrane segment at 623–645 threads the bilayer; that stretch reads FAVFLIIIAIIISNVLLTFLDFV. Residues 646–650 lie on the Vacuolar side of the membrane; that stretch reads HKETS. Residues 651–673 traverse the membrane as a helical segment; that stretch reads LITIFFLVIFSFLYFGFIIYFFN. Residues 674 to 684 are Cytoplasmic-facing; the sequence is IPIKKNYIQRN.

This sequence belongs to the NRAMP (TC 2.A.55) family.

The protein resides in the vacuole membrane. The catalysed reaction is Fe(2+)(in) = Fe(2+)(out). Iron transporter. Required for parasite development during the blood stages. Required for apicoplast biogenesis. Required for mitochondrial polarization. The sequence is that of Divalent metal transporter 1 from Plasmodium falciparum (isolate 3D7).